Consider the following 2670-residue polypeptide: Inositol 1,4,5-trisphosphate-gated calcium channel ITPR3 (2670 aa).

The Cytoplasmic portion of the chain corresponds to 1-2233; it reads MNEMSSFLHI…YVEGASTGVL (2233 aa). MIR domains follow at residues 113–173, 174–224, 232–288, 295–372, and 378–434; these read GDVV…LRSN, GDNV…INLF, EEVL…VEVV, GGAG…LDPT, and DSFV…IVSV. Residues arginine 266, leucine 269, and arginine 270 each contribute to the 1D-myo-inositol 1,4,5-trisphosphate site. 6 residues coordinate 1D-myo-inositol 1,4,5-trisphosphate: arginine 503, lysine 507, arginine 510, tyrosine 567, arginine 568, and lysine 569. Arginine 743 is a Ca(2+) binding site. Phosphoserine is present on residues serine 916 and serine 934. Ca(2+) is bound by residues glutamate 1122 and glutamate 1125. Residues 1138 to 1153 show a composition bias toward basic and acidic residues; it reads EVEAGATKDKKERPSD. Disordered regions lie at residues 1138–1164 and 1807–1835; these read EVEA…HGEK and NMSD…SFSM. Phosphoserine is present on residues serine 1813, serine 1832, and serine 1834. Residues glutamate 1881 and glutamate 1945 each coordinate Ca(2+). Positions 1995, 2148, and 2151 each coordinate ATP. The chain crosses the membrane as a helical span at residues 2234–2254; sequence GSPLISLLFWILICFSIAALF. The Extracellular segment spans residues 2255–2262; sequence TKRYSVRP. Residues 2263–2283 form a helical membrane-spanning segment; that stretch reads LIVALILRSIYYLGIGPTLNI. The Cytoplasmic segment spans residues 2284-2292; the sequence is LGALNLTNK. A helical transmembrane segment spans residues 2293 to 2310; the sequence is IVFVVSFVGNRGTFIRGY. The Extracellular segment spans residues 2311–2324; that stretch reads KAMVMDMEFLYHVG. A helical membrane pass occupies residues 2325-2345; sequence YILTSVLGLFAHELFYSILLF. Topologically, residues 2346–2367 are cytoplasmic; the sequence is DLIYREETLFNVIKSVTRNGRS. A helical transmembrane segment spans residues 2368 to 2388; the sequence is ILLTALLALILVYLFSIVGFL. The Extracellular portion of the chain corresponds to 2389 to 2495; it reads FLKDDFILEV…ESLFPARVVY (107 aa). The cysteines at positions 2454 and 2460 are disulfide-linked. Residues 2496–2516 traverse the membrane as a helical segment; sequence DLLFFFIVIIIVLNLIFGVII. The Cytoplasmic portion of the chain corresponds to 2517-2670; it reads DTFADLRSEK…FVDVQNCMSR (154 aa). The ATP site is built by cysteine 2537 and phenylalanine 2538. Position 2537 (cysteine 2537) interacts with Zn(2+). 2 residues coordinate Zn(2+): cysteine 2540 and histidine 2557. ATP-binding residues include lysine 2559, histidine 2562, asparagine 2563, and methionine 2564. A Zn(2+)-binding site is contributed by histidine 2562. Ca(2+) is bound at residue threonine 2580. Serine 2608 and serine 2669 each carry phosphoserine.

The protein belongs to the InsP3 receptor family. Homodimer. Homotetramer. Interacts with TRPC1, TRPC3, TRPC4. Interacts with TRPV4. Interacts with SIGMAR1. Found in a complex with AKT1 and PML; this interaction modulates IP3R3-phosphorylation and in turn ITPR3-dependent calcium release. Interacts with IRAG2 (via coiled-coil domain). Interacts with CABP1. Interacts with TMBIM4/LFG4. Interacts with CEMIP. Interacts with TESPA1. Interacts with TMEM203. Interacts with BOK; regulates ITPR3 expression. Interacts with BCL2L10. Interacts with CHGA and CHGB. In terms of processing, phosphorylated by AKT1 on serine and/or threonine residues.

The protein resides in the endoplasmic reticulum membrane. It is found in the cytoplasmic vesicle. The protein localises to the secretory vesicle membrane. It catalyses the reaction Ca(2+)(in) = Ca(2+)(out). Its activity is regulated as follows. Inositol 1,4,5-trisphosphate-gated calcium channel is regulated by cytosolic calcium in a biphasic manner. At low concentrations, cytosolic calcium binds at a high-affinity juxtamembrane domain (JD) calcium binding site, allowing ITPR3 to activate by escaping a low-energy resting state through an ensemble of preactivated states. At high cytosolic calcium concentrations, ITPR3 preferentially enters an inhibited state stabilized by calcium binding at a second, low-affinity cytoplasmic domain (CD) calcium binding site. In terms of biological role, inositol 1,4,5-trisphosphate-gated calcium channel that, upon 1D-myo-inositol 1,4,5-trisphosphate binding, transports calcium from the endoplasmic reticulum lumen to cytoplasm, thus releasing the intracellular calcium and therefore participates in cellular calcium ion homeostasis. 1D-myo-inositol 1,4,5-trisphosphate binds to the ligand-free channel without altering its global conformation, yielding the low-energy resting state, then progresses through resting-to preactivated transitions to the higher energy preactivated state, which increases affinity for calcium, promoting binding of the low basal cytosolic calcium at the juxtamembrane domain (JD) site, favoring the transition through the ensemble of high-energy intermediate states along the trajectory to the fully-open activated state. Upon opening, releases calcium in the cytosol where it can bind to the low-affinity cytoplasmic domain (CD) site and stabilizes the inhibited state to terminate calcium release. The sequence is that of Inositol 1,4,5-trisphosphate-gated calcium channel ITPR3 from Mus musculus (Mouse).